The following is a 130-amino-acid chain: Small ribosomal subunit protein eS6 (130 aa).

The interval 78–98 is disordered; it reads SGPPGFRPERKGERRRKTVRG.

This sequence belongs to the eukaryotic ribosomal protein eS6 family.

This is Small ribosomal subunit protein eS6 from Methanopyrus kandleri (strain AV19 / DSM 6324 / JCM 9639 / NBRC 100938).